A 546-amino-acid chain; its full sequence is Alpha-taxilin (546 aa).

Disordered stretches follow at residues 1–170 (MKNQ…GLGK) and 482–546 (NKRV…SARA). Over residues 11–21 (AKQSNPKSSPG) the composition is skewed to polar residues. 2 stretches are compositionally biased toward basic and acidic residues: residues 70-80 (DVSEELSRQLE) and 143-158 (EEIRQSDEVGDRDHRR). S72 carries the post-translational modification Phosphoserine. Residues 186–491 (EEKLAALCKK…NKRVQDLSAG (306 aa)) adopt a coiled-coil conformation. S515 carries the phosphoserine modification. The span at 530 to 546 (TEASGQTGPQEPTSARA) shows a compositional bias: polar residues.

This sequence belongs to the taxilin family. As to quaternary structure, binds to the C-terminal coiled coil region of syntaxin family members STX1A, STX3A and STX4A, but not when these proteins are complexed with SNAP25, VAMP2 or STXBP1, suggesting that it interacts with syntaxins that do not form the SNARE complex. In terms of tissue distribution, ubiquitous, with much higher expression in heart, kidney, liver and pancreas.

Functionally, may be involved in intracellular vesicle traffic and potentially in calcium-dependent exocytosis in neuroendocrine cells. The protein is Alpha-taxilin (TXLNA) of Homo sapiens (Human).